The primary structure comprises 696 residues: DNA ligase (696 aa).

NAD(+) is bound by residues 36–40 (DAEYD), 85–86 (SL), and Glu123. Lys125 acts as the N6-AMP-lysine intermediate in catalysis. 4 residues coordinate NAD(+): Arg146, Glu181, Lys319, and Lys343. Zn(2+)-binding residues include Cys437, Cys440, Cys455, and Cys461. The region spanning 618–696 (PEGTSLAGKT…EDGLKALLGL (79 aa)) is the BRCT domain.

The protein belongs to the NAD-dependent DNA ligase family. LigA subfamily. It depends on Mg(2+) as a cofactor. Requires Mn(2+) as cofactor.

It carries out the reaction NAD(+) + (deoxyribonucleotide)n-3'-hydroxyl + 5'-phospho-(deoxyribonucleotide)m = (deoxyribonucleotide)n+m + AMP + beta-nicotinamide D-nucleotide.. DNA ligase that catalyzes the formation of phosphodiester linkages between 5'-phosphoryl and 3'-hydroxyl groups in double-stranded DNA using NAD as a coenzyme and as the energy source for the reaction. It is essential for DNA replication and repair of damaged DNA. In Bordetella pertussis (strain Tohama I / ATCC BAA-589 / NCTC 13251), this protein is DNA ligase.